The sequence spans 156 residues: ATP synthase subunit b 1 (156 aa).

A helical membrane pass occupies residues 7–29 (LLGQAISFALFVWFCMKYVWPPL).

The protein belongs to the ATPase B chain family. F-type ATPases have 2 components, F(1) - the catalytic core - and F(0) - the membrane proton channel. F(1) has five subunits: alpha(3), beta(3), gamma(1), delta(1), epsilon(1). F(0) has three main subunits: a(1), b(2) and c(10-14). The alpha and beta chains form an alternating ring which encloses part of the gamma chain. F(1) is attached to F(0) by a central stalk formed by the gamma and epsilon chains, while a peripheral stalk is formed by the delta and b chains.

It is found in the cell inner membrane. Its function is as follows. F(1)F(0) ATP synthase produces ATP from ADP in the presence of a proton or sodium gradient. F-type ATPases consist of two structural domains, F(1) containing the extramembraneous catalytic core and F(0) containing the membrane proton channel, linked together by a central stalk and a peripheral stalk. During catalysis, ATP synthesis in the catalytic domain of F(1) is coupled via a rotary mechanism of the central stalk subunits to proton translocation. Functionally, component of the F(0) channel, it forms part of the peripheral stalk, linking F(1) to F(0). The polypeptide is ATP synthase subunit b 1 (Vibrio campbellii (strain ATCC BAA-1116)).